The following is a 315-amino-acid chain: Transcription factor MafAa (315 aa).

Residues Ser-52–Gly-104 are compositionally biased toward low complexity. Disordered regions lie at residues Ser-52 to Met-108 and Ala-169 to Arg-191. A compositionally biased stretch (basic residues) spans Gly-172–His-189. The segment at Arg-223 to Arg-248 is basic motif. In terms of domain architecture, bZIP spans Arg-223–Leu-286. Residues Arg-229–Lys-243 form an interaction with DNA region. The interval Leu-251 to Leu-272 is leucine-zipper. The segment at Ala-290–Met-315 is disordered. Positions Arg-298–Met-315 are enriched in polar residues.

This sequence belongs to the bZIP family. Maf subfamily.

Its subcellular location is the nucleus. Functionally, transcription factor, possibly involved in transcription regulation during lens development, including that of crystallin genes. Specifically binds to the alphaCE2 enhancer element of crystallin gene. The chain is Transcription factor MafAa (mafaa) from Danio rerio (Zebrafish).